The primary structure comprises 475 residues: 3-hydroxyacyl-CoA dehydrogenase-like protein LAM1 (475 aa).

99–104 (GTRPFA) is an NAD(+) binding site. Lysine 149 serves as a coordination point for CoA. Residue asparagine 245 coordinates NAD(+).

It belongs to the 3-hydroxyacyl-CoA dehydrogenase family.

Its pathway is mycotoxin biosynthesis. In terms of biological role, 3-hydroxyacyl-CoA dehydrogenase-like protein; part of the Tox1A locus, one of the 2 loci that mediate the biosynthesis of T-toxin, a family of linear polyketides 37 to 45 carbons in length, of which the major component is 41 carbons, and which leads to high virulence to maize. One of the PKSs (PKS1 or PKS2) could synthesize a precursor, used subsequently by the other PKS as starter unit, to add additional carbons. Variability in the length of the final carbon backbone C35-47 could be achieved by varying the number of condensation cycles, or use of different starter or extender units or might be due to decarboxylation of the penultimate product, catalyzed by DEC1. Additional proteins are required for the biosynthesis of T-toxin, including oxidoreductases RED1, RED2, RED3, LAM1 and OXI1, as well as esterase TOX9. This is 3-hydroxyacyl-CoA dehydrogenase-like protein LAM1 from Cochliobolus heterostrophus (strain C4 / ATCC 48331 / race T) (Southern corn leaf blight fungus).